Here is a 547-residue protein sequence, read N- to C-terminus: MSSVFRKILVTCALPYANGSIHIGHMLEHIQADIWVRYHRMRGHEVWFVSADDAHGTAIMLKAQDLEISPNKLIKNIRIEHQIDFSNFKISHDNYYSTHSLENLYLSRKIFTCLNEKGLIKEKKIFQLYDTVKKIFLPDRFIKGTCPICKSKNQYGDNCEICSATYEPTDLINPISVISGKKPILKNTKHLYFDLPSFTNMLKKWIHSGVLEESVIKKTEEWFKVGLKSWAISRDAPYFGFKIPNYPNKYFYVWLDAPIGYISAFKNLCFKSKKLNFNELWNQNSNYELYHFIGKDIIYFHTLFWPAILEAVSFRQPSGIFVHGHLTMNGLKLSKSRGALIKASDWIQYFDSDSLRYYYASKLSNKTHDIEINLEDFIQKINSDIVNKLVNLAARNASFINKYFNGYLSDKLSNIKLYKYFVNTSSSIEDFFENREFSFIVKESMRLLDVANQYINEKKPWKIKRTEENIRELQNICTMGINLFRIIMIFLKPIVPDLAIKTESFLISKLTWDGIKKPLLSHQINKFFPLYKRIDVEKMFEFMNICR.

Residues 15–25 (PYANGSIHIGH) carry the 'HIGH' region motif. Cys146, Cys149, Cys159, and Cys162 together coordinate Zn(2+). Residues 332–336 (KLSKS) carry the 'KMSKS' region motif. ATP is bound at residue Lys335.

Belongs to the class-I aminoacyl-tRNA synthetase family. MetG type 1 subfamily. In terms of assembly, monomer. Zn(2+) serves as cofactor.

The protein resides in the cytoplasm. It carries out the reaction tRNA(Met) + L-methionine + ATP = L-methionyl-tRNA(Met) + AMP + diphosphate. Functionally, is required not only for elongation of protein synthesis but also for the initiation of all mRNA translation through initiator tRNA(fMet) aminoacylation. This Buchnera aphidicola subsp. Acyrthosiphon pisum (strain APS) (Acyrthosiphon pisum symbiotic bacterium) protein is Methionine--tRNA ligase (metG).